The following is a 278-amino-acid chain: Large ribosomal subunit protein uL24m (278 aa).

A KOW domain is found at 109 to 142 (FFPGDLVQVMVGKDKGRQGLVLTTSRDSSDVIVD).

Belongs to the universal ribosomal protein uL24 family.

Its subcellular location is the mitochondrion. The chain is Large ribosomal subunit protein uL24m (mrpl-24) from Caenorhabditis elegans.